A 446-amino-acid chain; its full sequence is Glucose-1-phosphate adenylyltransferase (446 aa).

Alpha-D-glucose 1-phosphate-binding positions include Y119, G184, 199-200, and S217; that span reads EK.

It belongs to the bacterial/plant glucose-1-phosphate adenylyltransferase family. In terms of assembly, homotetramer.

It carries out the reaction alpha-D-glucose 1-phosphate + ATP + H(+) = ADP-alpha-D-glucose + diphosphate. The protein operates within glycan biosynthesis; glycogen biosynthesis. Functionally, involved in the biosynthesis of ADP-glucose, a building block required for the elongation reactions to produce glycogen. Catalyzes the reaction between ATP and alpha-D-glucose 1-phosphate (G1P) to produce pyrophosphate and ADP-Glc. This chain is Glucose-1-phosphate adenylyltransferase, found in Rhodopirellula baltica (strain DSM 10527 / NCIMB 13988 / SH1).